The primary structure comprises 239 residues: 1-(5-phosphoribosyl)-5-[(5-phosphoribosylamino)methylideneamino] imidazole-4-carboxamide isomerase (239 aa).

The Proton acceptor role is filled by Asp8. Catalysis depends on Asp129, which acts as the Proton donor.

The protein belongs to the HisA/HisF family.

It localises to the cytoplasm. It catalyses the reaction 1-(5-phospho-beta-D-ribosyl)-5-[(5-phospho-beta-D-ribosylamino)methylideneamino]imidazole-4-carboxamide = 5-[(5-phospho-1-deoxy-D-ribulos-1-ylimino)methylamino]-1-(5-phospho-beta-D-ribosyl)imidazole-4-carboxamide. The protein operates within amino-acid biosynthesis; L-histidine biosynthesis; L-histidine from 5-phospho-alpha-D-ribose 1-diphosphate: step 4/9. The polypeptide is 1-(5-phosphoribosyl)-5-[(5-phosphoribosylamino)methylideneamino] imidazole-4-carboxamide isomerase (Bacillus cereus (strain ZK / E33L)).